The chain runs to 758 residues: 5-methyltetrahydropteroyltriglutamate--homocysteine methyltransferase (758 aa).

5-methyltetrahydropteroyltri-L-glutamate-binding positions include 16-19 (RELK) and Lys117. Residues 436–438 (IGS) and Glu489 each bind L-homocysteine. Residues 436–438 (IGS) and Glu489 contribute to the L-methionine site. Residues 520 to 521 (RC) and Trp566 contribute to the 5-methyltetrahydropteroyltri-L-glutamate site. Asp604 contributes to the L-homocysteine binding site. Asp604 contributes to the L-methionine binding site. Glu610 serves as a coordination point for 5-methyltetrahydropteroyltri-L-glutamate. Residues His646, Cys648, and Glu670 each coordinate Zn(2+). The active-site Proton donor is His699. Residue Cys731 participates in Zn(2+) binding.

It belongs to the vitamin-B12 independent methionine synthase family. The cofactor is Zn(2+).

The enzyme catalyses 5-methyltetrahydropteroyltri-L-glutamate + L-homocysteine = tetrahydropteroyltri-L-glutamate + L-methionine. Its pathway is amino-acid biosynthesis; L-methionine biosynthesis via de novo pathway; L-methionine from L-homocysteine (MetE route): step 1/1. Catalyzes the transfer of a methyl group from 5-methyltetrahydrofolate to homocysteine resulting in methionine formation. The polypeptide is 5-methyltetrahydropteroyltriglutamate--homocysteine methyltransferase (Ruthia magnifica subsp. Calyptogena magnifica).